The primary structure comprises 164 residues: Ribosomal RNA large subunit methyltransferase H (164 aa).

Gly-109 contributes to the S-adenosyl-L-methionine binding site.

It belongs to the RNA methyltransferase RlmH family. In terms of assembly, homodimer.

It localises to the cytoplasm. It carries out the reaction pseudouridine(1915) in 23S rRNA + S-adenosyl-L-methionine = N(3)-methylpseudouridine(1915) in 23S rRNA + S-adenosyl-L-homocysteine + H(+). Functionally, specifically methylates the pseudouridine at position 1915 (m3Psi1915) in 23S rRNA. This chain is Ribosomal RNA large subunit methyltransferase H, found in Methylobacterium radiotolerans (strain ATCC 27329 / DSM 1819 / JCM 2831 / NBRC 15690 / NCIMB 10815 / 0-1).